A 246-amino-acid chain; its full sequence is MDSEHWISSLAAAKRFYAAQLGHVDDMAGIGMEEVEMEMEDDGEGMELELEMQLEEATWPDVACPYCYEDHDIASLCAHLEEDHPYEPHTSPCPICFEKITRDMLNHITMQHGYLFKSGRRMRRFDIPESQALSLLSRDLRDAQLQALLGGGHRQRRSNTTATNISADPLLSSFGLGFSTLDSEERSKAPVPIPDDTSIHKDTPAQPWESRIDSSLTSEEREQKRKQATDRATFVQGLVLSTLFED.

The interval 185 to 230 is disordered; the sequence is ERSKAPVPIPDDTSIHKDTPAQPWESRIDSSLTSEEREQKRKQATD. A compositionally biased stretch (basic and acidic residues) spans 218–229; the sequence is SEEREQKRKQAT.

This sequence belongs to the Di19 family.

The protein is Protein DEHYDRATION-INDUCED 19 homolog 3 (DI19-3) of Oryza sativa subsp. japonica (Rice).